A 274-amino-acid chain; its full sequence is MISVMADEKHKEYFKLYYFQYMIIGLCTILFLYSEISLVPRGQNIEFSLDDPSISKRYVPNELVGPLECLILSVGLSNMVVFWTCMFDKDLLKKNRVKRLRERPDGISNDFHFMHTSILCLMLIISINAALTGALKLIIGNLRPDFVDRCIPDLQKMSDSDSLVFGLDICKQTNKWILYEGLKSTPSGHSSFIVSTMGFTYLWQRVFTTRNTRSCIWCPLLALVVMVSRVIDHRHHWYDVVSGAVLAFLVIYCCWKWTFTNLAKRDILPSPVSV.

The Lumenal portion of the chain corresponds to 1–15 (MISVMADEKHKEYFK). The helical transmembrane segment at 16–33 (LYYFQYMIIGLCTILFLY) threads the bilayer. At 34–69 (SEISLVPRGQNIEFSLDDPSISKRYVPNELVGPLEC) the chain is on the cytoplasmic side. Residues 70–87 (LILSVGLSNMVVFWTCMF) form a helical membrane-spanning segment. Topologically, residues 88–117 (DKDLLKKNRVKRLRERPDGISNDFHFMHTS) are lumenal. A helical transmembrane segment spans residues 118 to 139 (ILCLMLIISINAALTGALKLII). Positions 136–144 (KLIIGNLRP) are phosphatase sequence motif I. The Cytoplasmic portion of the chain corresponds to 140–189 (GNLRPDFVDRCIPDLQKMSDSDSLVFGLDICKQTNKWILYEGLKSTPSGH). The tract at residues 186–189 (PSGH) is phosphatase sequence motif II. Residues 190 to 203 (SSFIVSTMGFTYLW) form a helical membrane-spanning segment. Over 204–214 (QRVFTTRNTRS) the chain is Lumenal. A helical membrane pass occupies residues 215 to 231 (CIWCPLLALVVMVSRVI). Residues 228 to 239 (SRVIDHRHHWYD) form a phosphatase sequence motif III region. At 232–237 (DHRHHW) the chain is on the cytoplasmic side. A helical membrane pass occupies residues 238 to 255 (YDVVSGAVLAFLVIYCCW). Residues 256-274 (KWTFTNLAKRDILPSPVSV) lie on the Lumenal side of the membrane.

The protein belongs to the PA-phosphatase related phosphoesterase family.

The protein resides in the golgi apparatus membrane. It catalyses the reaction a 1,2-diacyl-sn-glycerol 3-diphosphate + H2O = a 1,2-diacyl-sn-glycero-3-phosphate + phosphate + H(+). It carries out the reaction a 1,2-diacyl-sn-glycero-3-phosphate + H2O = a 1,2-diacyl-sn-glycerol + phosphate. The enzyme catalyses a 1-acyl-sn-glycero-3-phosphate + H2O = a 1-acyl-sn-glycerol + phosphate. Its activity is regulated as follows. PA phosphatase activity is magnesium ion-independent and potently inhibited by N-ethylmaleimide. Also inhibited by phenylglyoxal and propranolol. Catalyzes the dephosphorylation of diacylglycerol diphosphate (DGPP) to phosphatidate (PA) and the subsequent dephosphorylation of PA to diacylglycerol (DAG). Together with DPP1, regulates intracellular DGPP and PA levels which are phospholipid molecules believed to play a signaling role in stress response. Can also use lysophosphatidic acid (LPA) as a substrate. Substrate preference is PA &gt; DGPP &gt; LPA. This Saccharomyces cerevisiae (strain ATCC 204508 / S288c) (Baker's yeast) protein is Lipid phosphate phosphatase 1 (LPP1).